Reading from the N-terminus, the 285-residue chain is Probable endonuclease 4 (285 aa).

Zn(2+) is bound by residues His-69, His-109, Glu-145, Asp-179, His-182, His-216, Asp-229, His-231, and Glu-261.

The protein belongs to the AP endonuclease 2 family. Zn(2+) serves as cofactor.

The catalysed reaction is Endonucleolytic cleavage to 5'-phosphooligonucleotide end-products.. Endonuclease IV plays a role in DNA repair. It cleaves phosphodiester bonds at apurinic or apyrimidinic (AP) sites, generating a 3'-hydroxyl group and a 5'-terminal sugar phosphate. The protein is Probable endonuclease 4 of Shigella boydii serotype 18 (strain CDC 3083-94 / BS512).